Reading from the N-terminus, the 706-residue chain is Elongation factor G (706 aa).

Residues 8–297 (ERVRNIGIAA…AVIDYLPAPT (290 aa)) form the tr-type G domain. Residues 17–24 (AHIDAGKT), 96–100 (DTPGH), and 150–153 (NKMD) contribute to the GTP site.

Belongs to the TRAFAC class translation factor GTPase superfamily. Classic translation factor GTPase family. EF-G/EF-2 subfamily.

Its subcellular location is the cytoplasm. Catalyzes the GTP-dependent ribosomal translocation step during translation elongation. During this step, the ribosome changes from the pre-translocational (PRE) to the post-translocational (POST) state as the newly formed A-site-bound peptidyl-tRNA and P-site-bound deacylated tRNA move to the P and E sites, respectively. Catalyzes the coordinated movement of the two tRNA molecules, the mRNA and conformational changes in the ribosome. This is Elongation factor G from Cyanothece sp. (strain PCC 7425 / ATCC 29141).